Consider the following 948-residue polypeptide: MKEPSIVVKGARAHNLKDIDIELPKNKLIVMTGLSGSGKSSLAFDTIYAEGQRRYVESLSAYARQFLGQMDKPDVDTIEGLSPAISIDQKTTSKNPRSTVATVTEIYDYIRLLYARVGKPYCPNHNIEIESQTVQQMVDRIMELEARTKIQLLAPVIAHRKGSHEKLIEDIGKKGYVRLRIDGEIVDVNDVPTLDKNKNHTIEVVVDRLVVKDGIETRLADSIETALELSEGQLTVDVIDGEDLKFSESHACPICGFSIGELEPRMFSFNSPFGACPTCDGLGQKLTVDVDLVVPDKDKTLNEGAIEPWIPTSSDFYPTLLKRVCEVYKINMDKPFKKLTERQRDILLYGSGDKEIEFTFTQRQGGTRKRTMVFEGVVPNISRRFHESPSEYTREMMSKYMTELPCETCHGKRLSREALSVYVGGLNIGEVVEYSISQALNYYKNINLSEQDQAIANQILKEIISRLTFLNNVGLEYLTLNRASGTLSGGEAQRIRLATQIGSRLTGVLYVLDEPSIGLHQRDNDRLINTLKEMRDLGNTLIVVEHDDDTMRAADYLVDIGPGAGEHGGQIVSSGTPQKVMKDKKSLTGQYLSGKKRIEVPEYRRPASDRKISIRGARSNNLKGVDVDIPLSIMTVVTGVSGSGKSSLVNEVLYKSLAQKINKSKVKPGLYDKIEGIDQLDKIIDIDQSPIGRTPRSNPATYTGVFDDIRDVFAQTNEAKIRGYQKGRFSFNVKGGRCEACKGDGIIKIEMHFLPDVYVPCEVCDGKRYNRETLEVTYKGKNIADILEMTVEEATQFFENIPKIKRKLQTLVDVGLGYVTLGQQATTLSGGEAQRVKLASELHKRSTGKSIYILDEPTTGLHVDDISRLLKVLNRLVENGDTVVIIEHNLDVIKTADYIIDLGPEGGSGGGTIVATGTPEDIAQTKSSYTGKYLKEVLERDKQNTEDK.

33–40 contacts ATP; it reads GLSGSGKS. Residues 252–279 form a C4-type zinc finger; the sequence is CPICGFSIGELEPRMFSFNSPFGACPTC. ABC transporter domains lie at 309 to 587 and 607 to 935; these read WIPT…KKSL and ASDR…KYLK. ATP is bound at residue 639-646; sequence GVSGSGKS. The C4-type zinc finger occupies 738–764; it reads CEACKGDGIIKIEMHFLPDVYVPCEVC.

This sequence belongs to the ABC transporter superfamily. UvrA family. Forms a heterotetramer with UvrB during the search for lesions.

The protein resides in the cytoplasm. Functionally, the UvrABC repair system catalyzes the recognition and processing of DNA lesions. UvrA is an ATPase and a DNA-binding protein. A damage recognition complex composed of 2 UvrA and 2 UvrB subunits scans DNA for abnormalities. When the presence of a lesion has been verified by UvrB, the UvrA molecules dissociate. This Staphylococcus aureus (strain MRSA252) protein is UvrABC system protein A.